We begin with the raw amino-acid sequence, 35 residues long: Non-specific lipid-transfer protein 1 (35 aa).

A disulfide bond links cysteine 13 and cysteine 28.

As to expression, seeds.

In terms of biological role, plant non-specific lipid-transfer proteins transfer phospholipids as well as galactolipids across membranes. May play a role in wax or cutin deposition in the cell walls of expanding epidermal cells and certain secretory tissues. Inhibits the growth of F.oxysporum and P.infestans. The chain is Non-specific lipid-transfer protein 1 from Nigella sativa (Black cumin).